Reading from the N-terminus, the 57-residue chain is High light-inducible protein HliD (57 aa).

The Chlorophyll-binding motif signature appears at 25-30 (EKLNGR). Residues 25 to 46 (EKLNGRAAMVGFLLILVIEYFT) traverse the membrane as a helical segment.

It belongs to the Hlip family. In terms of assembly, probably forms dimers which bind 6 chlorophyll a and 2 beta-carotenoid molecules. Cofractionates in an approximately 50 kDa fraction of the thylakoid membrane with HliC. Does not associate with mature PSII. Purified in several chlorophyll- and carotenoid-containing complexes, including photosystem II (PSII) assembly intermediate complex RCII* (iD1, D1, D2, PsbE, PsbF, PsbI, Ycf39, Ycf48, HliC and HliD) and the Ycf39-Hlip complex (Ycf39, HliC, HliD and pigments).

The protein resides in the cellular thylakoid membrane. Involved in photosystem II (PSII) assembly and/or repair under high light stress. Required for binding of chlorophyll and carotenoids by the Ycf39-Hlip complex. The Ycf39-Hlip complex binds D1 at an early stage of PSII assembly along with Ycf48, ribosomes and ChlG, the last enzyme in chlorophyll biosynthesis; it may be involved in chlorophyll reuse and delivery to D1 in the initial stages of PSII assembly. Binds chlorophyll a and beta-carotenoid in a 3:1 stoichiometry in the presence and absence of Yfc39; in the Ycf39-HliC-HliD complex, HliD binds all the pigment. The Ycf39-Hlip complex efficiently quenches chlorophyll fluorescence, contributing to photoprotection. Deletion of 4 to 5 members of the Hlip family suggests the proteins are involved in regulation of chlorophyll biosynthesis, in stabilization of chlorophyll-binding proteins and/or in reuse of chlorophylls, and may regulate tetrapyrrole biosynthesis. Might bind chlorophyll and/or carotenoids in association with HliC (called the ScpBE pair). Functionally, the Hlips might regulate tetrapyrrole biosynthesis, maybe at the level of aminolevulinic acid synthesis and probably stabilize PSII assembly intermediates. The chain is High light-inducible protein HliD (hliD) from Synechocystis sp. (strain ATCC 27184 / PCC 6803 / Kazusa).